Here is a 483-residue protein sequence, read N- to C-terminus: Malonate-semialdehyde dehydrogenase 2 (483 aa).

NAD(+) contacts are provided by phenylalanine 152, lysine 176, glutamate 179, arginine 180, and serine 229. Residue cysteine 284 is the Nucleophile of the active site. Residue glutamate 384 coordinates NAD(+).

Belongs to the aldehyde dehydrogenase family. IolA subfamily. Homotetramer.

It catalyses the reaction 3-oxopropanoate + NAD(+) + CoA + H2O = hydrogencarbonate + acetyl-CoA + NADH + H(+). The enzyme catalyses 2-methyl-3-oxopropanoate + NAD(+) + CoA + H2O = propanoyl-CoA + hydrogencarbonate + NADH + H(+). It functions in the pathway polyol metabolism; myo-inositol degradation into acetyl-CoA; acetyl-CoA from myo-inositol: step 7/7. In terms of biological role, catalyzes the oxidation of malonate semialdehyde (MSA) and methylmalonate semialdehyde (MMSA) into acetyl-CoA and propanoyl-CoA, respectively. Is involved in a myo-inositol catabolic pathway. Bicarbonate, and not CO2, is the end-product of the enzymatic reaction. This chain is Malonate-semialdehyde dehydrogenase 2, found in Bacillus mycoides (strain KBAB4) (Bacillus weihenstephanensis).